The following is a 424-amino-acid chain: Serine--tRNA ligase (424 aa).

231–233 (TAE) is an L-serine binding site. 262–264 (RSE) contacts ATP. L-serine is bound at residue glutamate 285. 349-352 (EISS) serves as a coordination point for ATP. Serine 385 is a binding site for L-serine.

It belongs to the class-II aminoacyl-tRNA synthetase family. Type-1 seryl-tRNA synthetase subfamily. Homodimer. The tRNA molecule binds across the dimer.

It is found in the cytoplasm. The enzyme catalyses tRNA(Ser) + L-serine + ATP = L-seryl-tRNA(Ser) + AMP + diphosphate + H(+). It carries out the reaction tRNA(Sec) + L-serine + ATP = L-seryl-tRNA(Sec) + AMP + diphosphate + H(+). The protein operates within aminoacyl-tRNA biosynthesis; selenocysteinyl-tRNA(Sec) biosynthesis; L-seryl-tRNA(Sec) from L-serine and tRNA(Sec): step 1/1. Its function is as follows. Catalyzes the attachment of serine to tRNA(Ser). Is also able to aminoacylate tRNA(Sec) with serine, to form the misacylated tRNA L-seryl-tRNA(Sec), which will be further converted into selenocysteinyl-tRNA(Sec). The chain is Serine--tRNA ligase from Bacillus cereus (strain ZK / E33L).